The primary structure comprises 232 residues: Phosphatidylserine decarboxylase proenzyme (232 aa).

Serine 190 (schiff-base intermediate with substrate; via pyruvic acid) is an active-site residue. Residue serine 190 is modified to Pyruvic acid (Ser); by autocatalysis.

The protein belongs to the phosphatidylserine decarboxylase family. PSD-A subfamily. As to quaternary structure, heterodimer of a large membrane-associated beta subunit and a small pyruvoyl-containing alpha subunit. Pyruvate serves as cofactor. Post-translationally, is synthesized initially as an inactive proenzyme. Formation of the active enzyme involves a self-maturation process in which the active site pyruvoyl group is generated from an internal serine residue via an autocatalytic post-translational modification. Two non-identical subunits are generated from the proenzyme in this reaction, and the pyruvate is formed at the N-terminus of the alpha chain, which is derived from the carboxyl end of the proenzyme. The post-translation cleavage follows an unusual pathway, termed non-hydrolytic serinolysis, in which the side chain hydroxyl group of the serine supplies its oxygen atom to form the C-terminus of the beta chain, while the remainder of the serine residue undergoes an oxidative deamination to produce ammonia and the pyruvoyl prosthetic group on the alpha chain.

Its subcellular location is the cell membrane. The catalysed reaction is a 1,2-diacyl-sn-glycero-3-phospho-L-serine + H(+) = a 1,2-diacyl-sn-glycero-3-phosphoethanolamine + CO2. Its pathway is phospholipid metabolism; phosphatidylethanolamine biosynthesis; phosphatidylethanolamine from CDP-diacylglycerol: step 2/2. Its function is as follows. Catalyzes the formation of phosphatidylethanolamine (PtdEtn) from phosphatidylserine (PtdSer). The sequence is that of Phosphatidylserine decarboxylase proenzyme from Sinorhizobium medicae (strain WSM419) (Ensifer medicae).